Consider the following 198-residue polypeptide: Thymidine kinase (198 aa).

Residues 16–23 (GGMYSGKS) and 89–92 (EEGQ) each bind ATP. Glu90 serves as the catalytic Proton acceptor. Residues Cys146, Cys149, Cys184, and Cys187 each contribute to the Zn(2+) site.

The protein belongs to the thymidine kinase family. As to quaternary structure, homotetramer.

The protein resides in the cytoplasm. The enzyme catalyses thymidine + ATP = dTMP + ADP + H(+). In Dictyoglomus thermophilum (strain ATCC 35947 / DSM 3960 / H-6-12), this protein is Thymidine kinase.